A 74-amino-acid polypeptide reads, in one-letter code: Anionic peptide clone 8 (74 aa).

Positions 1-24 are cleaved as a signal peptide; it reads MVSKSLIVLLLVSVLVSTFFTTEA.

Belongs to the non-disulfide-bridged peptide (NDBP) superfamily. Long chain multifunctional peptide (group 2) family. As to expression, expressed by the venom gland.

The protein localises to the secreted. Functionally, may be an antimicrobial peptide. The protein is Anionic peptide clone 8 of Tityus costatus (Brazilian scorpion).